Reading from the N-terminus, the 302-residue chain is Sulfate adenylyltransferase subunit 2 (302 aa).

The interval 279 to 302 (ERQGRAIDHDQSGSMELKKRQGYF) is disordered. Residues 280–302 (RQGRAIDHDQSGSMELKKRQGYF) are compositionally biased toward basic and acidic residues.

It belongs to the PAPS reductase family. CysD subfamily. In terms of assembly, heterodimer composed of CysD, the smaller subunit, and CysN.

It carries out the reaction sulfate + ATP + H(+) = adenosine 5'-phosphosulfate + diphosphate. It participates in sulfur metabolism; hydrogen sulfide biosynthesis; sulfite from sulfate: step 1/3. Its function is as follows. With CysN forms the ATP sulfurylase (ATPS) that catalyzes the adenylation of sulfate producing adenosine 5'-phosphosulfate (APS) and diphosphate, the first enzymatic step in sulfur assimilation pathway. APS synthesis involves the formation of a high-energy phosphoric-sulfuric acid anhydride bond driven by GTP hydrolysis by CysN coupled to ATP hydrolysis by CysD. The chain is Sulfate adenylyltransferase subunit 2 from Photobacterium profundum (strain SS9).